Reading from the N-terminus, the 226-residue chain is Ribosomal RNA small subunit methyltransferase G (226 aa).

Residues glycine 86, leucine 91, 137–138 (VE), and arginine 150 contribute to the S-adenosyl-L-methionine site.

The protein belongs to the methyltransferase superfamily. RNA methyltransferase RsmG family.

The protein resides in the cytoplasm. The enzyme catalyses guanosine(527) in 16S rRNA + S-adenosyl-L-methionine = N(7)-methylguanosine(527) in 16S rRNA + S-adenosyl-L-homocysteine. In terms of biological role, specifically methylates the N7 position of guanine in position 527 of 16S rRNA. The sequence is that of Ribosomal RNA small subunit methyltransferase G from Polaromonas sp. (strain JS666 / ATCC BAA-500).